A 475-amino-acid chain; its full sequence is Protein ABCI7, chloroplastic (475 aa).

A chloroplast-targeting transit peptide spans 1-36; sequence MAAATVLGRLSLIPNLSSKPKLKSNRRTTSTSVSVR.

In terms of assembly, interacts with NAP7.

The protein localises to the plastid. It is found in the chloroplast. The protein is Protein ABCI7, chloroplastic (ABCI7) of Arabidopsis thaliana (Mouse-ear cress).